Reading from the N-terminus, the 561-residue chain is MKELLRTLISQGLAGCYADGSLSSGEFPSIIIEKPAHADHGDFATNVAMLLAKAEKKAPRMVAETLVSHLADGSGVCEKIEIAGPGFINFHLKDEAWRQTLLEVDQIGFEYGKSGVGGGKKIQVEFVSANPTGPLHIGHGRGAALGDTICRLLSATGWDVTREFYYNDAGQQIANLALSVQARCFGNGPDDPGWPSDGYQGEYIIDVARAYMARETVHADDQHVTAAGDPQDLEAIRRFAVAFLRREQDQDLAAFDVHFDVYSLESDLYADGSVERVVRRLVDSGHTYEQDDALWLRTTSFADDKDRVMRKSGGGYTYFVPDVAYHLRKWERGFTRVVNEQGADHHSTITRVRAGLQALDAGIPAGWPEYVLHQMVTVLRGGEEVKISKRAGSYVTLRDLIDEVGRDATRFFFVMRKPDSQLVFDIDLAKQKSLDNPVYYVQYAHARICSIFENAAEKGFVVPGADGVNLDQLIEPEEMAIVKALAFFPEVVEGSAANFEPHRIANYLQELAGLFHGFYNKNRVITEDSQLTAARLFLLKCVALTLKNALNLLGISAPEKM.

The short motif at 129–139 (ANPTGPLHIGH) is the 'HIGH' region element.

The protein belongs to the class-I aminoacyl-tRNA synthetase family. Monomer.

Its subcellular location is the cytoplasm. It catalyses the reaction tRNA(Arg) + L-arginine + ATP = L-arginyl-tRNA(Arg) + AMP + diphosphate. This Geotalea daltonii (strain DSM 22248 / JCM 15807 / FRC-32) (Geobacter daltonii) protein is Arginine--tRNA ligase.